The primary structure comprises 368 residues: Cytoskeleton protein RodZ (368 aa).

At M1 to G111 the chain is on the cytoplasmic side. The HTH cro/C1-type domain maps to L19–L79. The H-T-H motif DNA-binding region spans Q30–E49. Residues W112–W132 traverse the membrane as a helical; Signal-anchor for type II membrane protein segment. The Periplasmic segment spans residues W133 to E368. A disordered region spans residues S151–T243. The span at S193–T221 shows a compositional bias: low complexity. Polar residues predominate over residues V229–T243.

This sequence belongs to the RodZ family.

Its subcellular location is the cell inner membrane. Its function is as follows. Cytoskeletal protein that is involved in cell-shape control through regulation of the length of the long axis. The polypeptide is Cytoskeleton protein RodZ (Yersinia pseudotuberculosis serotype O:3 (strain YPIII)).